The primary structure comprises 375 residues: Superinfection exclusion protein (375 aa).

A signal peptide spans 1–15; the sequence is MIALLILSLACSVSA.

It belongs to the serpin family. Orthopoxvirus OPG040 subfamily. As to quaternary structure, interacts with OPG185/A56 protein.

The protein localises to the virion membrane. Its subcellular location is the host cell membrane. Functionally, negatively regulates superinfection and syncytium formation in infected host cells. Acts in concert with OPG185/A56 protein at the host cell membrane by interacting with and inhibiting the mature virion entry/fusion complex (EFC). This mechanism ensures that new virions released from the cell cannot enter already infected cells. The chain is Superinfection exclusion protein (OPG040) from Cynomys gunnisoni (Gunnison's prairie dog).